We begin with the raw amino-acid sequence, 126 residues long: Large ribosomal subunit protein mL52 (126 aa).

A mitochondrion-targeting transit peptide spans 1–28; the sequence is MLKITKICLASSATSTAQRSIALTAPRA.

This sequence belongs to the mitochondrion-specific ribosomal protein mL52 family. As to quaternary structure, component of the mitochondrial ribosome large subunit (39S) which comprises a 16S rRNA and about 50 distinct proteins.

The protein resides in the mitochondrion. This chain is Large ribosomal subunit protein mL52 (mRpL52), found in Drosophila melanogaster (Fruit fly).